The sequence spans 324 residues: Uric acid degradation bifunctional protein TTL (324 aa).

Ala-2 carries the post-translational modification N-acetylalanine. Residues 2–29 (AMEIGEDEWKVCCGSSEFAKQMSTSGPL) are required for BRI1-binding. The OHCU decarboxylase stretch occupies residues 2 to 161 (AMEIGEDEWK…LRMAKLFSDK (160 aa)). The Proton donor; for OHCU decarboxylase activity role is filled by His-58. Positions 58, 59, 80, 111, 113, and 115 each coordinate (S)-allantoin. The interval 178–324 (KPQDRLRIIG…PFSFSTYRGS (147 aa)) is HIU hydrolase. The short motif at 182-190 (RLRIIGGHL) is the Internal peroxisomal targeting signal (PTS2) element.

It in the N-terminal section; belongs to the OHCU decarboxylase family. The protein in the C-terminal section; belongs to the transthyretin family. 5-hydroxyisourate hydrolase subfamily. Homodimer. Forms tetramers. Interacts with BRI1 in a kinase-dependent manner. Interacts with B1L. Phosphorylated by BRI1 in vitro. As to expression, expressed ubiquitously with highest levels in flowers buds and elongating inflorescences. In terms of tissue distribution, mainly expressed in stems and leaves, and, to a lower extent, in flowers, flower buds and seedlings. Strongly expressed in flower buds and leaves, to a lower extent in stems, and at low levels in seedlings and flowers.

The protein localises to the cell membrane. It localises to the peroxisome. The protein resides in the cytoplasm. Its subcellular location is the cytosol. It catalyses the reaction 5-hydroxyisourate + H2O = 5-hydroxy-2-oxo-4-ureido-2,5-dihydro-1H-imidazole-5-carboxylate + H(+). The catalysed reaction is 5-hydroxy-2-oxo-4-ureido-2,5-dihydro-1H-imidazole-5-carboxylate + H(+) = (S)-allantoin + CO2. It participates in purine metabolism; urate degradation; (S)-allantoin from urate: step 2/3. Its pathway is purine metabolism; urate degradation; (S)-allantoin from urate: step 3/3. Its function is as follows. Involved in the last two steps of the degradation of uric acid, i.e. the hydrolysis of 5-hydroxyisourate (HIU) to 2-oxo-4-hydroxy-4-carboxy-5-ureidoimidazoline (OHCU) and its stereoselective decarboxylation to (S)-allantoin, a major ureide compound. Might function as a negative regulator to modulate brassinosteroid-mediated plant growth. Together with B1L, prevents plant growth and development, but by opposition to B1L, negatively regulates cold tolerance, probably in a brassinosteroid (BR) and allantoin-dependent manner. The protein is Uric acid degradation bifunctional protein TTL of Arabidopsis thaliana (Mouse-ear cress).